The following is a 229-amino-acid chain: DNA mismatch repair protein MutH (229 aa).

The protein belongs to the MutH family.

It localises to the cytoplasm. Its function is as follows. Sequence-specific endonuclease that cleaves unmethylated GATC sequences. It is involved in DNA mismatch repair. The protein is DNA mismatch repair protein MutH of Escherichia coli O6:K15:H31 (strain 536 / UPEC).